The following is a 494-amino-acid chain: Cobyric acid synthase (494 aa).

The GATase cobBQ-type domain occupies 248-444; sequence EIEIAIIKLP…LHGIFENDEW (197 aa). Cys-329 acts as the Nucleophile in catalysis. Residue His-436 is part of the active site.

Belongs to the CobB/CobQ family. CobQ subfamily.

Its pathway is cofactor biosynthesis; adenosylcobalamin biosynthesis. In terms of biological role, catalyzes amidations at positions B, D, E, and G on adenosylcobyrinic A,C-diamide. NH(2) groups are provided by glutamine, and one molecule of ATP is hydrogenolyzed for each amidation. The chain is Cobyric acid synthase from Prochlorococcus marinus (strain NATL1A).